The following is a 503-amino-acid chain: Glycerol kinase (503 aa).

Residue threonine 12 coordinates ADP. Residues threonine 12, threonine 13, and serine 14 each contribute to the ATP site. Threonine 12 is a binding site for sn-glycerol 3-phosphate. Position 16 (arginine 16) interacts with ADP. Sn-glycerol 3-phosphate is bound by residues arginine 82, glutamate 83, tyrosine 134, and aspartate 243. 5 residues coordinate glycerol: arginine 82, glutamate 83, tyrosine 134, aspartate 243, and glutamine 244. Positions 265 and 308 each coordinate ADP. The ATP site is built by threonine 265, glycine 308, glutamine 312, and glycine 412. ADP is bound at residue glycine 412.

It belongs to the FGGY kinase family.

The enzyme catalyses glycerol + ATP = sn-glycerol 3-phosphate + ADP + H(+). It participates in polyol metabolism; glycerol degradation via glycerol kinase pathway; sn-glycerol 3-phosphate from glycerol: step 1/1. Its activity is regulated as follows. Inhibited by fructose 1,6-bisphosphate (FBP). Functionally, key enzyme in the regulation of glycerol uptake and metabolism. Catalyzes the phosphorylation of glycerol to yield sn-glycerol 3-phosphate. In Nitrobacter hamburgensis (strain DSM 10229 / NCIMB 13809 / X14), this protein is Glycerol kinase.